Reading from the N-terminus, the 189-residue chain is Crossover junction endodeoxyribonuclease RuvC (189 aa).

Residues aspartate 8, glutamate 67, and aspartate 139 contribute to the active site. Residues aspartate 8, glutamate 67, and aspartate 139 each coordinate Mg(2+).

This sequence belongs to the RuvC family. Homodimer which binds Holliday junction (HJ) DNA. The HJ becomes 2-fold symmetrical on binding to RuvC with unstacked arms; it has a different conformation from HJ DNA in complex with RuvA. In the full resolvosome a probable DNA-RuvA(4)-RuvB(12)-RuvC(2) complex forms which resolves the HJ. Mg(2+) is required as a cofactor.

It is found in the cytoplasm. It carries out the reaction Endonucleolytic cleavage at a junction such as a reciprocal single-stranded crossover between two homologous DNA duplexes (Holliday junction).. Its function is as follows. The RuvA-RuvB-RuvC complex processes Holliday junction (HJ) DNA during genetic recombination and DNA repair. Endonuclease that resolves HJ intermediates. Cleaves cruciform DNA by making single-stranded nicks across the HJ at symmetrical positions within the homologous arms, yielding a 5'-phosphate and a 3'-hydroxyl group; requires a central core of homology in the junction. The consensus cleavage sequence is 5'-(A/T)TT(C/G)-3'. Cleavage occurs on the 3'-side of the TT dinucleotide at the point of strand exchange. HJ branch migration catalyzed by RuvA-RuvB allows RuvC to scan DNA until it finds its consensus sequence, where it cleaves and resolves the cruciform DNA. This is Crossover junction endodeoxyribonuclease RuvC from Histophilus somni (strain 129Pt) (Haemophilus somnus).